The following is a 356-amino-acid chain: Protein RecA (356 aa).

ATP is bound at residue 77–84 (GPESSGKT).

Belongs to the RecA family.

It localises to the cytoplasm. In terms of biological role, can catalyze the hydrolysis of ATP in the presence of single-stranded DNA, the ATP-dependent uptake of single-stranded DNA by duplex DNA, and the ATP-dependent hybridization of homologous single-stranded DNAs. It interacts with LexA causing its activation and leading to its autocatalytic cleavage. The sequence is that of Protein RecA from Caulobacter vibrioides (strain ATCC 19089 / CIP 103742 / CB 15) (Caulobacter crescentus).